We begin with the raw amino-acid sequence, 858 residues long: Rho GTPase-activating protein 17 (858 aa).

The region spanning 14–246 is the BAR domain; sequence QTVGRAEKTE…MRAHQDKWAE (233 aa). One can recognise a Rho-GAP domain in the interval 252–442; it reads TPLEEHLKRS…PIIQHADWFF (191 aa). Polar residues predominate over residues 459 to 475; that stretch reads TPNSNHSSHTGNDSDSG. A disordered region spans residues 459–482; sequence TPNSNHSSHTGNDSDSGTLERKRP. Ser484 is modified (phosphoserine). The interval 516–823 is disordered; it reads RKHISPAFQP…VTDTNSRVSE (308 aa). Polar residues predominate over residues 543–552; sequence PSQSSRADSN. The span at 553-563 shows a compositional bias: low complexity; it reads SVGGPVPSSSG. At Ser575 the chain carries Phosphoserine. Residues 592-617 show a composition bias toward polar residues; sequence RNSNQITTVPNQAQTGGNSHQLSVGT. The span at 637-650 shows a compositional bias: pro residues; sequence APAPPKPGNPPPGH. Positions 653–702 are enriched in low complexity; sequence GQSSPGTGTSPKPSTRSPSPPQQQQQQQQQQQQQQQQQQQQQQQQQQQQQ. Residues Ser710 and Ser712 each carry the phosphoserine modification. Composition is skewed to pro residues over residues 716 to 729 and 738 to 756; these read IQAPNHPPPQPPTQ and EPGPTPPQTPTPPSTPPPA. 3 positions are modified to phosphothreonine: Thr742, Thr746, and Thr748. The SH3-binding motif lies at 742–755; that stretch reads TPPQTPTPPSTPPP. Position 751 is a phosphoserine (Ser751). Position 752 is a phosphothreonine (Thr752). Positions 757 to 769 are enriched in polar residues; it reads KQNSSQSETTQLH. Over residues 784-794 the composition is skewed to pro residues; it reads RPSVPPPPNPP. Residues 806 to 823 show a composition bias toward polar residues; it reads SVPTASRIVTDTNSRVSE.

Component of a complex whose core is composed of ARHGAP17, AMOT, PALS1, PATJ and PARD3/PAR3. Interacts with NHERF1, FNBP1, TRIP10, CAPZA (CAPZA1, CAPZA2 or CAPZA3), CAPZB, CD2AP and SH3KBP1/CIN85. In terms of tissue distribution, highly expressed in brain; neuron-specific (at protein level). Isoform 2, isoform 3 and isoform 4 are predominantly expressed in neuronal tissues and correlate well with the differentiation of neurons, while isoform 1 is strongly expressed in embryonic brain.

It is found in the membrane. The protein resides in the cytoplasm. The protein localises to the cell junction. Its subcellular location is the tight junction. Functionally, rho GTPase-activating protein involved in the maintenance of tight junction by regulating the activity of CDC42, thereby playing a central role in apical polarity of epithelial cells. Specifically acts as a GTPase activator for the CDC42 GTPase by converting it to an inactive GDP-bound state. The complex formed with AMOT acts by regulating the uptake of polarity proteins at tight junctions, possibly by deciding whether tight junction transmembrane proteins are recycled back to the plasma membrane or sent elsewhere. Participates in the Ca(2+)-dependent regulation of exocytosis, possibly by catalyzing GTPase activity of Rho family proteins and by inducing the reorganization of the cortical actin filaments. Acts as a GTPase activator in vitro for RAC1. The polypeptide is Rho GTPase-activating protein 17 (Arhgap17) (Rattus norvegicus (Rat)).